The following is a 504-amino-acid chain: Maturase K (504 aa).

The protein belongs to the intron maturase 2 family. MatK subfamily.

Its subcellular location is the plastid. It is found in the chloroplast. Functionally, usually encoded in the trnK tRNA gene intron. Probably assists in splicing its own and other chloroplast group II introns. This is Maturase K from Amaranthus caudatus (Love-lies-bleeding).